The sequence spans 567 residues: 25S rRNA (cytosine-C(5))-methyltransferase NSUN5 (567 aa).

The segment covering 1–17 (MVARRNKPKAPLVKHRF) has biased composition (basic residues). Residues 1–88 (MVARRNKPKA…KTPPATKQKF (88 aa)) form a disordered region. S-adenosyl-L-methionine contacts are provided by residues 312–318 (CSAPGNK), Glu336, Asp363, and Asp383. The active-site Nucleophile is the Cys444.

Belongs to the class I-like SAM-binding methyltransferase superfamily. RsmB/NOP family.

It catalyses the reaction a cytidine in 25S rRNA + S-adenosyl-L-methionine = a 5-methylcytidine in 25S rRNA + S-adenosyl-L-homocysteine + H(+). Functionally, S-adenosyl-L-methionine-dependent methyltransferase that specifically methylates the C(5) position of cytosine 2268 (m5C2268) in 25S rRNA. This Arabidopsis thaliana (Mouse-ear cress) protein is 25S rRNA (cytosine-C(5))-methyltransferase NSUN5.